The following is a 97-amino-acid chain: Citrate lyase acyl carrier protein (97 aa).

An O-(phosphoribosyl dephospho-coenzyme A)serine modification is found at Ser14.

It belongs to the CitD family. In terms of assembly, oligomer with a subunit composition of (alpha,beta,gamma)6.

Its subcellular location is the cytoplasm. Covalent carrier of the coenzyme of citrate lyase. This is Citrate lyase acyl carrier protein from Lactobacillus acidophilus (strain ATCC 700396 / NCK56 / N2 / NCFM).